The following is a 205-amino-acid chain: Guanylate kinase (205 aa).

A Guanylate kinase-like domain is found at 3–181 (GSLYIISAPS…ALSELHSIFL (179 aa)). 10 to 17 (APSGAGKT) provides a ligand contact to ATP.

The protein belongs to the guanylate kinase family.

The protein resides in the cytoplasm. It catalyses the reaction GMP + ATP = GDP + ADP. Functionally, essential for recycling GMP and indirectly, cGMP. This is Guanylate kinase from Hydrogenovibrio crunogenus (strain DSM 25203 / XCL-2) (Thiomicrospira crunogena).